A 202-amino-acid chain; its full sequence is Superoxide dismutase [Fe] (202 aa).

Fe cation contacts are provided by H30, H78, D164, and H168.

It belongs to the iron/manganese superoxide dismutase family. In terms of assembly, homotetramer. Fe cation serves as cofactor.

The catalysed reaction is 2 superoxide + 2 H(+) = H2O2 + O2. In terms of biological role, destroys superoxide anion radicals which are normally produced within the cells and which are toxic to biological systems. The protein is Superoxide dismutase [Fe] (sod) of Methanothermobacter marburgensis (strain ATCC BAA-927 / DSM 2133 / JCM 14651 / NBRC 100331 / OCM 82 / Marburg) (Methanobacterium thermoautotrophicum).